The sequence spans 227 residues: UPF0758 protein Spro_4842 (227 aa).

The MPN domain occupies Ala105–Leu227. Positions 176, 178, and 189 each coordinate Zn(2+). A JAMM motif motif is present at residues His176 to Asp189.

It belongs to the UPF0758 family. YicR subfamily.

This chain is UPF0758 protein Spro_4842, found in Serratia proteamaculans (strain 568).